A 447-amino-acid polypeptide reads, in one-letter code: uncharacterized protein (447 aa).

The segment at 392–435 (RFTKPSSSVAKSTSPSLRNSGSDESDLNQSDSDKEDERVVPVPK) is disordered. Low complexity predominate over residues 395 to 407 (KPSSSVAKSTSPS). Over residues 408 to 421 (LRNSGSDESDLNQS) the composition is skewed to polar residues.

This is an uncharacterized protein from Invertebrate iridescent virus 3 (IIV-3).